We begin with the raw amino-acid sequence, 319 residues long: Beta-xylosidase (319 aa).

The active-site Proton acceptor is Asp-14. The Proton donor role is filled by Glu-222.

This sequence belongs to the glycosyl hydrolase 43 family.

The catalysed reaction is Hydrolysis of (1-&gt;4)-beta-D-xylans, to remove successive D-xylose residues from the non-reducing termini.. Exoxylanase capable of acting on certain xylans and xylooligosaccharides. The chain is Beta-xylosidase (xynB) from Xylanibacter ruminicola (Prevotella ruminicola).